A 46-amino-acid chain; its full sequence is uncharacterized protein (46 aa).

This is an uncharacterized protein from Shigella flexneri.